Here is a 693-residue protein sequence, read N- to C-terminus: Elongation factor G 1 (693 aa).

In terms of domain architecture, tr-type G spans 4–281 (NKLRNIGISA…AVTRFLPSPH (278 aa)). Residues 13–20 (AHIDSGKT), 80–84 (DTPGH), and 134–137 (NKCD) contribute to the GTP site.

The protein belongs to the TRAFAC class translation factor GTPase superfamily. Classic translation factor GTPase family. EF-G/EF-2 subfamily.

The protein resides in the cytoplasm. Catalyzes the GTP-dependent ribosomal translocation step during translation elongation. During this step, the ribosome changes from the pre-translocational (PRE) to the post-translocational (POST) state as the newly formed A-site-bound peptidyl-tRNA and P-site-bound deacylated tRNA move to the P and E sites, respectively. Catalyzes the coordinated movement of the two tRNA molecules, the mRNA and conformational changes in the ribosome. This chain is Elongation factor G 1, found in Borrelia garinii subsp. bavariensis (strain ATCC BAA-2496 / DSM 23469 / PBi) (Borreliella bavariensis).